The chain runs to 441 residues: Ribosomal protein uS12 methylthiotransferase RimO (441 aa).

Residues 8–118 (PKIGFVSLGC…VLQHVHHYVP (111 aa)) enclose the MTTase N-terminal domain. Positions 17, 53, 82, 150, 154, and 157 each coordinate [4Fe-4S] cluster. The Radical SAM core domain occupies 136-373 (LTPRHYAYLK…MQLQQQISAE (238 aa)). A TRAM domain is found at 376–441 (QEKVGREILV…DEYDLWGSRV (66 aa)).

The protein belongs to the methylthiotransferase family. RimO subfamily. [4Fe-4S] cluster is required as a cofactor.

It is found in the cytoplasm. The catalysed reaction is L-aspartate(89)-[ribosomal protein uS12]-hydrogen + (sulfur carrier)-SH + AH2 + 2 S-adenosyl-L-methionine = 3-methylsulfanyl-L-aspartate(89)-[ribosomal protein uS12]-hydrogen + (sulfur carrier)-H + 5'-deoxyadenosine + L-methionine + A + S-adenosyl-L-homocysteine + 2 H(+). Catalyzes the methylthiolation of an aspartic acid residue of ribosomal protein uS12. The protein is Ribosomal protein uS12 methylthiotransferase RimO of Salmonella paratyphi B (strain ATCC BAA-1250 / SPB7).